Here is an 84-residue protein sequence, read N- to C-terminus: U8-theraphotoxin-Hhn1c 3 (84 aa).

Positions 1–21 are cleaved as a signal peptide; sequence MKVALIVCLVWVMAMMELVSC. Cystine bridges form between Cys23–Cys35, Cys29–Cys44, Cys34–Cys67, Cys54–Cys75, and Cys69–Cys81.

The protein belongs to the AVIT (prokineticin) family. As to expression, expressed by the venom gland.

Its subcellular location is the secreted. The sequence is that of U8-theraphotoxin-Hhn1c 3 from Cyriopagopus hainanus (Chinese bird spider).